Here is a 732-residue protein sequence, read N- to C-terminus: Nephrocystin-1 (732 aa).

Positions 3–105 form a coiled coil; it reads ARRQRDPLQA…LQGLAVTISR (103 aa). A Phosphotyrosine; by FAK2 modification is found at Y46. Disordered regions lie at residues 103–153 and 205–244; these read ISRE…KWST and TYLE…KQRT. 2 stretches are compositionally biased toward acidic residues: residues 115 to 145 and 210 to 236; these read TEEE…EKEE and YSEE…ETAD. A phosphoserine; by CK2 mark is found at S121, S123, and S126. A coiled-coil region spans residues 127–150; sequence EDSGGEEEDAEEEEEEKEENESHK. In terms of domain architecture, SH3 spans 152–212; that stretch reads STGEEYIAVG…PRTYLEPYSE (61 aa). Y349 is modified (phosphotyrosine; by FAK2). Residue Y721 is modified to Phosphotyrosine; by SRC.

Belongs to the nephrocystin-1 family. In terms of assembly, interacts with BCAR1, PTK2B/PYK2 and tensin. Interacts with INVS and NPHP3. Interacts with PACS1; the interaction is dependent on NPHP1 phosphorylation by CK2. Interacts with KIF7. Interacts with AHI1 and TNK2. Interacts with NPHP4 in a complex containing NPHP1, NPHP4 and RPGRIP1L. Interacts with IQCB1; the interaction likely requires additional interactors. Interacts with ANKS3. Interacts with SPATA7. Interacts with FLNA. Phosphorylation by CK2 is required for the interaction with PACS1 and the targeting to the base region of cilia. In terms of tissue distribution, widespread expression, with highest levels in pituitary gland, spinal cord, thyroid gland, testis, skeletal muscle, lymph node and trachea. Weakly expressed in heart, kidney and pancreas. Expressed in nasal epithelial cells (at protein level). Expressed in the renal collecting duct (at protein level).

It is found in the cell junction. The protein resides in the adherens junction. Its subcellular location is the cell projection. It localises to the cilium. The protein localises to the cytoplasm. It is found in the cytoskeleton. The protein resides in the cilium axoneme. Its subcellular location is the tight junction. In terms of biological role, together with BCAR1 it may play a role in the control of epithelial cell polarity. Involved in the organization of apical junctions in kidney cells together with NPHP4 and RPGRIP1L/NPHP8. Does not seem to be strictly required for ciliogenesis. Seems to help to recruit PTK2B/PYK2 to cell matrix adhesions, thereby initiating phosphorylation of PTK2B/PYK2 and PTK2B/PYK2-dependent signaling. May play a role in the regulation of intraflagellar transport (IFT) during cilia assembly. Required for normal retina development. In connecting photoreceptor cilia influences the movement of some IFT proteins such as IFT88 and WDR19. Involved in spermatogenesis. This chain is Nephrocystin-1 (NPHP1), found in Homo sapiens (Human).